A 1196-amino-acid chain; its full sequence is Sorbin and SH3 domain-containing protein 2 (1196 aa).

2 disordered regions span residues 25–57 (VQSS…ETLN) and 75–95 (PNLQ…GNSG). Residues serine 27, serine 28, and serine 40 each carry the phosphoserine modification. Residues 83–92 (PTQSHITING) are compositionally biased toward polar residues. Residues serine 130 and serine 143 each carry the phosphoserine modification. Position 148 is an alanine amide (methionine 148). Residues 166 to 227 (VIKAPHYPGI…YNTPYTYNAG (62 aa)) enclose the SoHo domain. The span at 235–247 (AQSHPAAKTQTYR) shows a compositional bias: polar residues. Disordered regions lie at residues 235-314 (AQSH…EPGK) and 329-407 (SSID…GDDS). Basic and acidic residues-rich tracts occupy residues 252–262 (SHSDNGTDAFK) and 276–312 (RPRD…EYEP). Position 254 is a phosphoserine (serine 254). The segment covering 329–343 (SSIDRSLERPSSSAS) has biased composition (polar residues). Residues serine 334, serine 340, serine 343, and serine 354 each carry the phosphoserine modification. Threonine 372 bears the Phosphothreonine mark. A Phosphoserine modification is found at serine 382. Low complexity predominate over residues 382–399 (SSSTFTTSFISSSPSSPS). Threonine 387 carries the phosphothreonine modification. Phosphoserine occurs at positions 392, 393, 394, 396, 397, 399, 478, 589, 592, 645, 648, 844, and 938. A disordered region spans residues 929-958 (QDHESPRSYSSTLTDLGRSVSRERRGTPEK). Positions 948–958 (VSRERRGTPEK) are enriched in basic and acidic residues. 2 SH3 domains span residues 959 to 1018 (EVKL…KLTP) and 1034 to 1095 (GEIG…VVKR). A phosphoserine mark is found at serine 1113 and serine 1119. One can recognise an SH3 3 domain in the interval 1137–1196 (GGGEPFQALYNYTPRNEDELELRESDVVDVMEKCDDGWFVGTSRRTKFFGTFPGNYVKRL).

In terms of assembly, interacts with ABL1/c-Abl, ABL2/v-Abl/Arg, ACTN, CBL and PALLD. Interacts with ABL, CBL, DNM1, DNM2, FLOT1, AFDN, PTK2B/PYK2, SAPAP, SPTAN1, SYNJ1, SYNJ2, VCL/vinculin and WASF. Interacts with PTPN12 and WASF1 via its SH3 domains; this interaction may mediate the partial PTPN12 and WASF1 translocation to focal adhesion sites. In terms of processing, ubiquitinated by CBL. Expressed in brain; found in synapses in cerebellum.

The protein localises to the cytoplasm. The protein resides in the perinuclear region. Its subcellular location is the apical cell membrane. It is found in the cell junction. It localises to the focal adhesion. The protein localises to the cell projection. The protein resides in the lamellipodium. Its function is as follows. Adapter protein that plays a role in the assembling of signaling complexes, being a link between ABL kinases and actin cytoskeleton. Can form complex with ABL1 and CBL, thus promoting ubiquitination and degradation of ABL1. May play a role in the regulation of pancreatic cell adhesion, possibly by acting on WASF1 phosphorylation, enhancing phosphorylation by ABL1, as well as dephosphorylation by PTPN12. Isoform 2 increases water and sodium absorption in the intestine and gall-bladder. This is Sorbin and SH3 domain-containing protein 2 (Sorbs2) from Rattus norvegicus (Rat).